The primary structure comprises 73 residues: Translation initiation factor IF-1 (73 aa).

An S1-like domain is found at 1 to 73 (MAKKDGAIEV…SRGRIVYRYK (73 aa)).

This sequence belongs to the IF-1 family. As to quaternary structure, component of the 30S ribosomal translation pre-initiation complex which assembles on the 30S ribosome in the order IF-2 and IF-3, IF-1 and N-formylmethionyl-tRNA(fMet); mRNA recruitment can occur at any time during PIC assembly.

It localises to the cytoplasm. One of the essential components for the initiation of protein synthesis. Stabilizes the binding of IF-2 and IF-3 on the 30S subunit to which N-formylmethionyl-tRNA(fMet) subsequently binds. Helps modulate mRNA selection, yielding the 30S pre-initiation complex (PIC). Upon addition of the 50S ribosomal subunit IF-1, IF-2 and IF-3 are released leaving the mature 70S translation initiation complex. The sequence is that of Translation initiation factor IF-1 from Mycobacterium avium (strain 104).